Consider the following 221-residue polypeptide: MDYRNQSLGALAIAIPQATKLFRQHQLDFCCGGKQTLLRAANKLNLDIDALEAQLSALQTEPHSSEDWQQQPLTNLISFIISRYHDRHREQLPELVLMAEKVERVHGEKPTCPRGLAAELSAILEELTQHMYKEEQILFPMIQRGMGSQASGPIFVMEAEHDAVGQQLEVVKQLTQNVTPPEGACNTWRALYTGINEFITDLMEHIHLENNLLFPRALRGE.

The protein belongs to the RIC family. YtfE subfamily. As to quaternary structure, homodimer.

The protein localises to the cytoplasm. Its function is as follows. Di-iron-containing protein involved in the repair of iron-sulfur clusters damaged by oxidative and nitrosative stress conditions. This chain is Iron-sulfur cluster repair protein YtfE, found in Yersinia pseudotuberculosis serotype IB (strain PB1/+).